The primary structure comprises 330 residues: Aquaporin Lacbi1:307192 (330 aa).

At 1 to 40 (MSATPIIHLRDVKKRTGVLNAWERVRNKPQVHWAMECFAE) the chain is on the cytoplasmic side. Residues 41-61 (ALGVFFYVYFGLGSTAAWVIG) form a helical membrane-spanning segment. Over 62–71 (NILKQSGLSS) the chain is Extracellular. A helical transmembrane segment spans residues 72–92 (VFQIGFAYAFGILFAIGVCAA). At 93–124 (TSGGHFNPCVTIAFTIFRGFPPLKAVRYIVAQ) the chain is on the cytoplasmic side. The NPA 1 signature appears at 99 to 101 (NPC). The helical transmembrane segment at 125–145 (ILGAYIASALVYNQWKVLIVE) threads the bilayer. Over 146-157 (SELLLKQAGVYE) the chain is Extracellular. The helical transmembrane segment at 158 to 178 (TTMFTPNGPAGIFALYLLPGA) threads the bilayer. At 179 to 183 (QTLPR) the chain is on the cytoplasmic side. The helical transmembrane segment at 184 to 204 (AFLNEFVNCFVLALVIWAALD) threads the bilayer. The Extracellular portion of the chain corresponds to 205–207 (PTS). The helical transmembrane segment at 208–228 (FMIPPVMAPFIIAAAYAGSIW) threads the bilayer. At 229–264 (GYAVPAISLNSARDIGCRLFALTIWGKSAAGGSYSA) the chain is on the cytoplasmic side. An NPA 2 motif is present at residues 238 to 240 (NSA). Residues 265–285 (ITALVNIPATLLAAVVYELFL) form a helical membrane-spanning segment. Residues 286–330 (VDSDRVVAGSHLEFMNVAANHRRHRHQAEDDNHGDADDSSQEKPV) are Extracellular-facing. A disordered region spans residues 308 to 330 (RHRHQAEDDNHGDADDSSQEKPV). Positions 312 to 330 (QAEDDNHGDADDSSQEKPV) are enriched in basic and acidic residues.

Belongs to the MIP/aquaporin (TC 1.A.8) family.

The protein localises to the membrane. Its function is as follows. Water channel-like protein that does not show transport of water nor ammonium across membranes. The chain is Aquaporin Lacbi1:307192 from Laccaria bicolor (strain S238N-H82 / ATCC MYA-4686) (Bicoloured deceiver).